The sequence spans 345 residues: MSLFGLLLLTSALAGQRQGTQAESNLSSKFQFSSNKEQNGVQDPQHERIITVSTNGSIHSPRFPHTYPRNTVLVWRLVAVEENVWIQLTFDERFGLEDPEDDICKYDFVEVEEPSDGTILGRWCGSGTVPGKQISKGNQIRIRFVSDEYFPSEPGFCIHYNIVMPQFTEAVSPSVLPPSALPLDLLNNAITAFSTLEDLIRYLEPERWQLDLEDLYRPTWQLLGKAFVFGRKSRVVDLNLLTEEVRLYSCTPRNFSVSIREELKRTDTIFWPGCLLVKRCGGNCACCLHNCNECQCVPSKVTKKYHEVLQLRPKTGVRGLHKSLTDVALEHHEECDCVCRGSTGG.

The signal sequence occupies residues 1-22 (MSLFGLLLLTSALAGQRQGTQA). Residues Asn-25 and Asn-55 are each glycosylated (N-linked (GlcNAc...) asparagine). One can recognise a CUB domain in the interval 46–163 (HERIITVSTN…PGFCIHYNIV (118 aa)). Cystine bridges form between Cys-104–Cys-124, Cys-250–Cys-294, Cys-280–Cys-335, and Cys-287–Cys-337.

Belongs to the PDGF/VEGF growth factor family. As to quaternary structure, homodimer; disulfide-linked. Interacts with PDGFRA homodimers, and with heterodimers formed by PDGFRA and PDGFRB. Interacts (via CUB domain) with PLAT (via kringle domain). In terms of processing, proteolytic removal of the N-terminal CUB domain releasing the core domain is necessary for unmasking the receptor-binding epitopes of the core domain. Cleavage after basic residues in the hinge region (region connecting the CUB and growth factor domains) gives rise to the receptor-binding form. Cleaved by PLAT and PLG. Post-translationally, sumoylated with SUMO1. N-glycosylated. Expressed in the fallopian tube, vascular smooth muscle cells in kidney, breast and colon and in visceral smooth muscle of the gastrointestinal tract. Highly expressed in retinal pigment epithelia. Expressed in medulloblastoma. In the kidney, constitutively expressed in parietal epithelial cells of Bowman's capsule, tubular epithelial cells and in arterial endothelial cells (at protein level). Highly expressed in the platelets, prostate, testis and uterus. Higher expression is observed in uterine leiomyomata. Weaker expression in the spleen, thymus, heart, pancreas, liver, ovary cells and small intestine, and negligible expression in the colon and peripheral blood leukocytes.

It localises to the cytoplasm. The protein resides in the cytosol. Its subcellular location is the secreted. The protein localises to the nucleus. It is found in the cytoplasmic granule. It localises to the cell membrane. In terms of biological role, growth factor that plays an essential role in the regulation of embryonic development, cell proliferation, cell migration, survival and chemotaxis. Potent mitogen and chemoattractant for cells of mesenchymal origin. Required for normal skeleton formation during embryonic development, especially for normal development of the craniofacial skeleton and for normal development of the palate. Required for normal skin morphogenesis during embryonic development. Plays an important role in wound healing, where it appears to be involved in three stages: inflammation, proliferation and remodeling. Plays an important role in angiogenesis and blood vessel development. Involved in fibrotic processes, in which transformation of interstitial fibroblasts into myofibroblasts plus collagen deposition occurs. The CUB domain has mitogenic activity in coronary artery smooth muscle cells, suggesting a role beyond the maintenance of the latency of the PDGF domain. In the nucleus, PDGFC seems to have additional function. The sequence is that of Platelet-derived growth factor C (PDGFC) from Homo sapiens (Human).